Here is a 734-residue protein sequence, read N- to C-terminus: NAD(P)H-quinone oxidoreductase subunit 5, chloroplastic (734 aa).

Transmembrane regions (helical) follow at residues 9 to 29 (WVIPLLPLPVIMSMGFGLFLV), 39 to 59 (IWAFPSVLLLSIAMVFSVHLS), 89 to 109 (IDPLTSIMLILITTVGILVLI), 125 to 145 (FVYISFFNTSMLGLVTSSNLI), 147 to 167 (IYFFWELVGMCSYLLIGFWFT), 185 to 205 (GDFGLLLGILGFFWITGSLEF), 224 to 244 (LLTILCAFLLFLGAVAKSAQF), 258 to 278 (TPISALIHAATMVAAGIFLIA), 280 to 300 (LLPLFISLPLIMSFISLIGTL), 327 to 347 (LGYMMLALGIGSYQAALFHLI), 354 to 374 (ALLFLGSGSVIHSMEPLVGYS), 396 to 416 (TCFLWGTLSLCGIPPLACFWS), 425 to 445 (WLYSPFFGIIASFTAGLTAFY), 542 to 562 (LFPLLILLLCTLFIGSIGIHF), 605 to 625 (SLAIFGLFIAYMFYGSAYSFF), and 714 to 734 (ISSYLFFFLCYVSVFLFFFLS).

It belongs to the complex I subunit 5 family. As to quaternary structure, NDH is composed of at least 16 different subunits, 5 of which are encoded in the nucleus.

It localises to the plastid. It is found in the chloroplast thylakoid membrane. The catalysed reaction is a plastoquinone + NADH + (n+1) H(+)(in) = a plastoquinol + NAD(+) + n H(+)(out). It carries out the reaction a plastoquinone + NADPH + (n+1) H(+)(in) = a plastoquinol + NADP(+) + n H(+)(out). In terms of biological role, NDH shuttles electrons from NAD(P)H:plastoquinone, via FMN and iron-sulfur (Fe-S) centers, to quinones in the photosynthetic chain and possibly in a chloroplast respiratory chain. The immediate electron acceptor for the enzyme in this species is believed to be plastoquinone. Couples the redox reaction to proton translocation, and thus conserves the redox energy in a proton gradient. This chain is NAD(P)H-quinone oxidoreductase subunit 5, chloroplastic (ndhF), found in Oryza nivara (Indian wild rice).